The primary structure comprises 78 residues: D-alanyl carrier protein (78 aa).

A Carrier domain is found at 1-78 (MEFREQVLDL…KIVEALEELK (78 aa)). An O-(pantetheine 4'-phosphoryl)serine modification is found at serine 36.

The protein belongs to the DltC family. In terms of processing, 4'-phosphopantetheine is transferred from CoA to a specific serine of apo-DCP.

It localises to the cytoplasm. It functions in the pathway cell wall biogenesis; lipoteichoic acid biosynthesis. In terms of biological role, carrier protein involved in the D-alanylation of lipoteichoic acid (LTA). The loading of thioester-linked D-alanine onto DltC is catalyzed by D-alanine--D-alanyl carrier protein ligase DltA. The DltC-carried D-alanyl group is further transferred to cell membrane phosphatidylglycerol (PG) by forming an ester bond, probably catalyzed by DltD. D-alanylation of LTA plays an important role in modulating the properties of the cell wall in Gram-positive bacteria, influencing the net charge of the cell wall. The polypeptide is D-alanyl carrier protein (Staphylococcus carnosus (strain TM300)).